Reading from the N-terminus, the 127-residue chain is Glycine cleavage system H protein (127 aa).

One can recognise a Lipoyl-binding domain in the interval 22–104 (KARIGITHFA…YEKAWMIVVE (83 aa)). Lysine 63 carries the N6-lipoyllysine modification.

The protein belongs to the GcvH family. In terms of assembly, the glycine cleavage system is composed of four proteins: P, T, L and H. (R)-lipoate is required as a cofactor.

Its function is as follows. The glycine cleavage system catalyzes the degradation of glycine. The H protein shuttles the methylamine group of glycine from the P protein to the T protein. In terms of biological role, is also involved in protein lipoylation via its role as an octanoyl/lipoyl carrier protein intermediate. This is Glycine cleavage system H protein from Bacillus subtilis (strain 168).